Reading from the N-terminus, the 59-residue chain is Temporin-CDYe (59 aa).

A signal peptide spans 1–22 (MFTLKKSMLLLLFLGTISLTLC). Residues 23-42 (EEERDANEEEENGGEVKVEE) constitute a propeptide that is removed on maturation.

The protein belongs to the frog skin active peptide (FSAP) family. Temporin subfamily. In terms of tissue distribution, expressed by the skin glands.

The protein localises to the secreted. Functionally, antimicrobial peptide. In Rana dybowskii (Dybovsky's frog), this protein is Temporin-CDYe.